The following is an 881-amino-acid chain: Valine--tRNA ligase (881 aa).

A 'HIGH' region motif is present at residues 49 to 59; sequence PNVTGKLHLGH. Residues 526-530 carry the 'KMSKS' region motif; that stretch reads KMSKS. Lys-529 is a binding site for ATP. Residues 810–881 adopt a coiled-coil conformation; the sequence is LADLINLDEE…VRQRLADLEK (72 aa).

The protein belongs to the class-I aminoacyl-tRNA synthetase family. ValS type 1 subfamily. As to quaternary structure, monomer.

It localises to the cytoplasm. It catalyses the reaction tRNA(Val) + L-valine + ATP = L-valyl-tRNA(Val) + AMP + diphosphate. Catalyzes the attachment of valine to tRNA(Val). As ValRS can inadvertently accommodate and process structurally similar amino acids such as threonine, to avoid such errors, it has a 'posttransfer' editing activity that hydrolyzes mischarged Thr-tRNA(Val) in a tRNA-dependent manner. The sequence is that of Valine--tRNA ligase from Bacillus thuringiensis subsp. konkukian (strain 97-27).